Reading from the N-terminus, the 140-residue chain is Small ribosomal subunit protein uS12 (140 aa).

The interval Met1–Asp20 is disordered. The residue at position 102 (Asp102) is a 3-methylthioaspartic acid. The disordered stretch occupies residues Asp121–Lys140. Over residues Tyr130–Lys140 the composition is skewed to basic residues.

It belongs to the universal ribosomal protein uS12 family. In terms of assembly, part of the 30S ribosomal subunit. Contacts proteins S8 and S17. May interact with IF1 in the 30S initiation complex.

Its function is as follows. With S4 and S5 plays an important role in translational accuracy. Interacts with and stabilizes bases of the 16S rRNA that are involved in tRNA selection in the A site and with the mRNA backbone. Located at the interface of the 30S and 50S subunits, it traverses the body of the 30S subunit contacting proteins on the other side and probably holding the rRNA structure together. The combined cluster of proteins S8, S12 and S17 appears to hold together the shoulder and platform of the 30S subunit. This is Small ribosomal subunit protein uS12 from Exiguobacterium sibiricum (strain DSM 17290 / CCUG 55495 / CIP 109462 / JCM 13490 / 255-15).